A 199-amino-acid polypeptide reads, in one-letter code: NADH-quinone oxidoreductase subunit C (199 aa).

It belongs to the complex I 30 kDa subunit family. As to quaternary structure, NDH-1 is composed of 14 different subunits. Subunits NuoB, C, D, E, F, and G constitute the peripheral sector of the complex.

It localises to the cell inner membrane. The catalysed reaction is a quinone + NADH + 5 H(+)(in) = a quinol + NAD(+) + 4 H(+)(out). Its function is as follows. NDH-1 shuttles electrons from NADH, via FMN and iron-sulfur (Fe-S) centers, to quinones in the respiratory chain. The immediate electron acceptor for the enzyme in this species is believed to be ubiquinone. Couples the redox reaction to proton translocation (for every two electrons transferred, four hydrogen ions are translocated across the cytoplasmic membrane), and thus conserves the redox energy in a proton gradient. This Rhodobacter capsulatus (Rhodopseudomonas capsulata) protein is NADH-quinone oxidoreductase subunit C.